Consider the following 122-residue polypeptide: uncharacterized protein (122 aa).

Residues 10–120 (VFARILRGEI…AGRRLGPMIT (111 aa)) form the HIT domain. A Histidine triad motif motif is present at residues 104–108 (HLHIH).

This is an uncharacterized protein from Azospirillum brasilense.